The sequence spans 366 residues: Chorismate synthase (366 aa).

NADP(+) is bound by residues R48 and R54. FMN is bound by residues 125-127 (RSS), 238-239 (NA), G278, 293-297 (KPTSS), and R319.

The protein belongs to the chorismate synthase family. In terms of assembly, homotetramer. It depends on FMNH2 as a cofactor.

It catalyses the reaction 5-O-(1-carboxyvinyl)-3-phosphoshikimate = chorismate + phosphate. Its pathway is metabolic intermediate biosynthesis; chorismate biosynthesis; chorismate from D-erythrose 4-phosphate and phosphoenolpyruvate: step 7/7. In terms of biological role, catalyzes the anti-1,4-elimination of the C-3 phosphate and the C-6 proR hydrogen from 5-enolpyruvylshikimate-3-phosphate (EPSP) to yield chorismate, which is the branch point compound that serves as the starting substrate for the three terminal pathways of aromatic amino acid biosynthesis. This reaction introduces a second double bond into the aromatic ring system. The protein is Chorismate synthase of Burkholderia multivorans (strain ATCC 17616 / 249).